The chain runs to 173 residues: Bifunctional protein PyrR (173 aa).

A PRPP-binding motif is present at residues V93–T105.

Belongs to the purine/pyrimidine phosphoribosyltransferase family. PyrR subfamily. In terms of assembly, homodimer and homohexamer; in equilibrium.

The enzyme catalyses UMP + diphosphate = 5-phospho-alpha-D-ribose 1-diphosphate + uracil. Its function is as follows. Regulates transcriptional attenuation of the pyrimidine nucleotide (pyr) operon by binding in a uridine-dependent manner to specific sites on pyr mRNA. This disrupts an antiterminator hairpin in the RNA and favors formation of a downstream transcription terminator, leading to a reduced expression of downstream genes. Functionally, also displays a weak uracil phosphoribosyltransferase activity which is not physiologically significant. In Streptococcus thermophilus (strain ATCC BAA-491 / LMD-9), this protein is Bifunctional protein PyrR.